Here is a 106-residue protein sequence, read N- to C-terminus: Nucleoid-associated protein RPA0616 (106 aa).

It belongs to the YbaB/EbfC family. In terms of assembly, homodimer.

It is found in the cytoplasm. The protein resides in the nucleoid. Binds to DNA and alters its conformation. May be involved in regulation of gene expression, nucleoid organization and DNA protection. The chain is Nucleoid-associated protein RPA0616 from Rhodopseudomonas palustris (strain ATCC BAA-98 / CGA009).